The sequence spans 697 residues: Elongation factor G (697 aa).

The tr-type G domain maps to 10 to 285 (ERTRNIGIMA…AVVDYLPSPL (276 aa)). Residues 19 to 26 (AHIDAGKT), 83 to 87 (DTPGH), and 137 to 140 (NKMD) contribute to the GTP site.

It belongs to the TRAFAC class translation factor GTPase superfamily. Classic translation factor GTPase family. EF-G/EF-2 subfamily.

Its subcellular location is the cytoplasm. Catalyzes the GTP-dependent ribosomal translocation step during translation elongation. During this step, the ribosome changes from the pre-translocational (PRE) to the post-translocational (POST) state as the newly formed A-site-bound peptidyl-tRNA and P-site-bound deacylated tRNA move to the P and E sites, respectively. Catalyzes the coordinated movement of the two tRNA molecules, the mRNA and conformational changes in the ribosome. The polypeptide is Elongation factor G (Pediococcus pentosaceus (strain ATCC 25745 / CCUG 21536 / LMG 10740 / 183-1w)).